We begin with the raw amino-acid sequence, 224 residues long: Ribonuclease 3 (224 aa).

Residues 4 to 127 form the RNase III domain; that stretch reads IEKLEQSLTY…IIGAIHLEAG (124 aa). Glu-40 is a binding site for Mg(2+). The active site involves Asp-44. Asp-113 and Glu-116 together coordinate Mg(2+). Glu-116 is an active-site residue. Positions 154-223 constitute a DRBM domain; the sequence is DYKTKLQEIT…AKIALEKLGA (70 aa).

Belongs to the ribonuclease III family. As to quaternary structure, homodimer. The cofactor is Mg(2+).

The protein resides in the cytoplasm. The enzyme catalyses Endonucleolytic cleavage to 5'-phosphomonoester.. Its function is as follows. Digests double-stranded RNA. Involved in the processing of primary rRNA transcript to yield the immediate precursors to the large and small rRNAs (23S and 16S). Also processes some mRNAs, and tRNAs when they are encoded in the rRNA operon. Functionally, CRISPR (clustered regularly interspaced short palindromic repeat) is an adaptive immune system that provides protection against mobile genetic elements (viruses, transposable elements and conjugative plasmids). CRISPR clusters contain spacers, sequences complementary to antecedent mobile elements, and target invading nucleic acids. CRISPR clusters are transcribed and processed into CRISPR RNA (crRNA). In this organism endogenous ribonuclease 3 and Cas9 are required for correct coprocessing of pre-crRNA and the trans-encoded small RNA (tracrRNA). Cas9, crRNA and tracrRNA are required for cleavage of invading DNA. Complements pre-crRNA and tracrRNA coprocessing defects in an rnc deletion in S.pyogenes strain 370. The polypeptide is Ribonuclease 3 (Campylobacter jejuni subsp. jejuni serotype O:2 (strain ATCC 700819 / NCTC 11168)).